Here is a 541-residue protein sequence, read N- to C-terminus: Copper transport protein CutJ (541 aa).

The first 25 residues, 1-25, serve as a signal peptide directing secretion; the sequence is MKRNRWWIILLLFLVFLPKTSFAHA. Residues His-24 and His-110 each coordinate Cu cation. 8 helical membrane passes run 146–166, 180–200, 228–248, 262–282, 293–313, 335–355, 370–390, and 407–427; these read AILY…LFWY, ILTG…PIQT, SIWI…IPAI, PLIF…AAVV, FLHL…VLLL, WALT…FFII, LLVK…HFLL, and WAIG…PSPP.

This sequence in the N-terminal section; belongs to the CopC family. It in the C-terminal section; belongs to the CopD family.

It is found in the cell membrane. Functionally, involved in uptake of extracellular oxidized copper under copper-limiting conditions. This Bacillus subtilis (strain 168) protein is Copper transport protein CutJ.